A 262-amino-acid chain; its full sequence is Hydroxyethylthiazole kinase (262 aa).

M50 contributes to the substrate binding site. Residues R125 and T171 each coordinate ATP. G198 serves as a coordination point for substrate.

The protein belongs to the Thz kinase family. Requires Mg(2+) as cofactor.

The catalysed reaction is 5-(2-hydroxyethyl)-4-methylthiazole + ATP = 4-methyl-5-(2-phosphooxyethyl)-thiazole + ADP + H(+). It functions in the pathway cofactor biosynthesis; thiamine diphosphate biosynthesis; 4-methyl-5-(2-phosphoethyl)-thiazole from 5-(2-hydroxyethyl)-4-methylthiazole: step 1/1. Its function is as follows. Catalyzes the phosphorylation of the hydroxyl group of 4-methyl-5-beta-hydroxyethylthiazole (THZ). In Escherichia coli O6:K15:H31 (strain 536 / UPEC), this protein is Hydroxyethylthiazole kinase.